The following is a 656-amino-acid chain: Protein NO VEIN-LIKE (656 aa).

The tract at residues 283–375 (DKDYCGKHTR…HVKQKIPKSA (93 aa)) is disordered. Over residues 299 to 308 (EENDSADYEV) the composition is skewed to acidic residues. Basic and acidic residues predominate over residues 342 to 353 (ESRNHEKSDSPK). Residues 354 to 371 (LLRRGPSKLRRGHVKQKI) are compositionally biased toward basic residues.

This Arabidopsis thaliana (Mouse-ear cress) protein is Protein NO VEIN-LIKE.